Consider the following 692-residue polypeptide: Polyribonucleotide nucleotidyltransferase (692 aa).

Residues aspartate 484 and aspartate 490 each contribute to the Mg(2+) site. A KH domain is found at proline 551–threonine 614. An S1 motif domain is found at glycine 620–lysine 688.

Belongs to the polyribonucleotide nucleotidyltransferase family. Mg(2+) serves as cofactor.

The protein resides in the cytoplasm. It catalyses the reaction RNA(n+1) + phosphate = RNA(n) + a ribonucleoside 5'-diphosphate. Its function is as follows. Involved in mRNA degradation. Catalyzes the phosphorolysis of single-stranded polyribonucleotides processively in the 3'- to 5'-direction. In Desulfotalea psychrophila (strain LSv54 / DSM 12343), this protein is Polyribonucleotide nucleotidyltransferase.